Consider the following 423-residue polypeptide: MTDLLSRAHADALDAADPLRSLRDAFVFPQHGDRDQTYLVGNSLGLQPRAARAMVDEVLDQWGTLGVEGHFTGPTQWLTYHQLVRDALARVVGAQPGEVVAMNTLSVNLHLMMASFYRPTHERGAILIEAGAFPSDRHAVESQLRLRGLDPATHLIEVEADEPNGTLSMAAIADAIAQHGPRLALVLWPGIQYRTGQAFDLAEIVRLARAQGAAVGCDLAHAVGNIPLTLHDDGVDFAVWCNYKYLNAGPGAVGGCFVHERHANSDLPRIAGWWGHEQQTRFRMDPQFVPSPGAEGWQLSNPPVLALAPLRASLTLFDQAGMAALRAKSERLTGHLEQLIRARVPQVLQIVTPAEPMHRGCQLSLRVAGGRAQGRSLFEHLHAAGVLGDWREPDVIRIAPVPLYNRFSDLHTFVGQVEAWAAA.

Residues Leu-105, Ser-106, 133–136, Asp-218, His-221, and Tyr-243 contribute to the pyridoxal 5'-phosphate site; that span reads FPSD. At Lys-244 the chain carries N6-(pyridoxal phosphate)lysine. Residues Trp-273 and Asn-301 each coordinate pyridoxal 5'-phosphate.

It belongs to the kynureninase family. Homodimer. Requires pyridoxal 5'-phosphate as cofactor.

It carries out the reaction L-kynurenine + H2O = anthranilate + L-alanine + H(+). The enzyme catalyses 3-hydroxy-L-kynurenine + H2O = 3-hydroxyanthranilate + L-alanine + H(+). Its pathway is amino-acid degradation; L-kynurenine degradation; L-alanine and anthranilate from L-kynurenine: step 1/1. It participates in cofactor biosynthesis; NAD(+) biosynthesis; quinolinate from L-kynurenine: step 2/3. Functionally, catalyzes the cleavage of L-kynurenine (L-Kyn) and L-3-hydroxykynurenine (L-3OHKyn) into anthranilic acid (AA) and 3-hydroxyanthranilic acid (3-OHAA), respectively. This chain is Kynureninase, found in Xanthomonas oryzae pv. oryzae (strain KACC10331 / KXO85).